The following is a 326-amino-acid chain: Glycerol-3-phosphate dehydrogenase [NAD(P)+] (326 aa).

4 residues coordinate NADPH: Trp16, Arg36, Arg37, and Lys106. Residues Lys106 and Gly132 each contribute to the sn-glycerol 3-phosphate site. Ala136 provides a ligand contact to NADPH. Residues Lys187, Asp240, Ser250, Arg251, and Asn252 each contribute to the sn-glycerol 3-phosphate site. Lys187 acts as the Proton acceptor in catalysis. Arg251 provides a ligand contact to NADPH. Val271 and Glu273 together coordinate NADPH.

This sequence belongs to the NAD-dependent glycerol-3-phosphate dehydrogenase family.

Its subcellular location is the cytoplasm. It catalyses the reaction sn-glycerol 3-phosphate + NAD(+) = dihydroxyacetone phosphate + NADH + H(+). The enzyme catalyses sn-glycerol 3-phosphate + NADP(+) = dihydroxyacetone phosphate + NADPH + H(+). It participates in membrane lipid metabolism; glycerophospholipid metabolism. In terms of biological role, catalyzes the reduction of the glycolytic intermediate dihydroxyacetone phosphate (DHAP) to sn-glycerol 3-phosphate (G3P), the key precursor for phospholipid synthesis. The chain is Glycerol-3-phosphate dehydrogenase [NAD(P)+] from Deinococcus geothermalis (strain DSM 11300 / CIP 105573 / AG-3a).